A 464-amino-acid polypeptide reads, in one-letter code: Putative F-box/LRR-repeat protein At3g59160 (464 aa).

In terms of domain architecture, F-box spans 12–60 (KDMINDLPDALLCHVLSYLTTKEAASTSLLSRRWRYLLAFVPNLEFDDS). LRR repeat units follow at residues 172–198 (TLKI…HLES), 200–225 (MFDE…VLHH), 233–258 (SCSV…GMHE), 336–367 (VLCL…TIQS), 368–393 (TPKV…VFQG), and 408–433 (KIEK…VLHY).

In Arabidopsis thaliana (Mouse-ear cress), this protein is Putative F-box/LRR-repeat protein At3g59160.